The chain runs to 381 residues: Ribosomal lysine N-methyltransferase set11 (381 aa).

An SET domain is found at 23–224 (PSLEFSVIPD…KGEQIFLCYG (202 aa)). Y223 serves as a coordination point for S-adenosyl-L-methionine.

It belongs to the class V-like SAM-binding methyltransferase superfamily. RKM2 family.

It localises to the cytoplasm. The protein localises to the nucleus. Its subcellular location is the nucleolus. Functionally, S-adenosyl-L-methionine-dependent protein-lysine N-methyltransferase that trimethylates 60S ribosomal protein L12 (rpl1201 and rpl1202) at 'Lys-4' and may dimethylate L12 also at 'Lys-40' and 'Lys-41'. Overexpression causes a severe growth defect. Has a role in meiosis. The chain is Ribosomal lysine N-methyltransferase set11 (set11) from Schizosaccharomyces pombe (strain 972 / ATCC 24843) (Fission yeast).